Reading from the N-terminus, the 100-residue chain is Signal recognition particle 19 kDa protein (100 aa).

Belongs to the SRP19 family. In terms of assembly, part of the signal recognition particle protein translocation system, which is composed of SRP and FtsY. Archaeal SRP consists of a 7S RNA molecule of 300 nucleotides and two protein subunits: SRP54 and SRP19.

It localises to the cytoplasm. Functionally, involved in targeting and insertion of nascent membrane proteins into the cytoplasmic membrane. Binds directly to 7S RNA and mediates binding of the 54 kDa subunit of the SRP. The protein is Signal recognition particle 19 kDa protein of Pyrococcus furiosus (strain ATCC 43587 / DSM 3638 / JCM 8422 / Vc1).